The following is a 157-amino-acid chain: Crossover junction endodeoxyribonuclease RuvC (157 aa).

Catalysis depends on residues Asp7, Glu66, and Asp139. Mg(2+) is bound by residues Asp7, Glu66, and Asp139.

Belongs to the RuvC family. In terms of assembly, homodimer which binds Holliday junction (HJ) DNA. The HJ becomes 2-fold symmetrical on binding to RuvC with unstacked arms; it has a different conformation from HJ DNA in complex with RuvA. In the full resolvosome a probable DNA-RuvA(4)-RuvB(12)-RuvC(2) complex forms which resolves the HJ. The cofactor is Mg(2+).

It is found in the cytoplasm. The catalysed reaction is Endonucleolytic cleavage at a junction such as a reciprocal single-stranded crossover between two homologous DNA duplexes (Holliday junction).. The RuvA-RuvB-RuvC complex processes Holliday junction (HJ) DNA during genetic recombination and DNA repair. Endonuclease that resolves HJ intermediates. Cleaves cruciform DNA by making single-stranded nicks across the HJ at symmetrical positions within the homologous arms, yielding a 5'-phosphate and a 3'-hydroxyl group; requires a central core of homology in the junction. The consensus cleavage sequence is 5'-(A/T)TT(C/G)-3'. Cleavage occurs on the 3'-side of the TT dinucleotide at the point of strand exchange. HJ branch migration catalyzed by RuvA-RuvB allows RuvC to scan DNA until it finds its consensus sequence, where it cleaves and resolves the cruciform DNA. This Campylobacter curvus (strain 525.92) protein is Crossover junction endodeoxyribonuclease RuvC.